The chain runs to 395 residues: S-adenosylmethionine synthase (395 aa).

Histidine 16 provides a ligand contact to ATP. Aspartate 18 is a Mg(2+) binding site. K(+) is bound at residue glutamate 44. Residues glutamate 57 and glutamine 100 each coordinate L-methionine. Positions 100 to 110 are flexible loop; it reads QSPDIAQGVDR. ATP-binding positions include 167-169, 233-234, aspartate 242, 248-249, alanine 265, and lysine 269; these read DAK, RF, and RK. L-methionine is bound at residue aspartate 242. Position 273 (lysine 273) interacts with L-methionine.

The protein belongs to the AdoMet synthase family. In terms of assembly, homotetramer; dimer of dimers. Mg(2+) serves as cofactor. It depends on K(+) as a cofactor.

Its subcellular location is the cytoplasm. The catalysed reaction is L-methionine + ATP + H2O = S-adenosyl-L-methionine + phosphate + diphosphate. The protein operates within amino-acid biosynthesis; S-adenosyl-L-methionine biosynthesis; S-adenosyl-L-methionine from L-methionine: step 1/1. Its function is as follows. Catalyzes the formation of S-adenosylmethionine (AdoMet) from methionine and ATP. The overall synthetic reaction is composed of two sequential steps, AdoMet formation and the subsequent tripolyphosphate hydrolysis which occurs prior to release of AdoMet from the enzyme. The chain is S-adenosylmethionine synthase from Paraburkholderia phymatum (strain DSM 17167 / CIP 108236 / LMG 21445 / STM815) (Burkholderia phymatum).